A 338-amino-acid chain; its full sequence is Holliday junction branch migration complex subunit RuvB (338 aa).

Residues 1–22 (MIEADRLIHAEPQGPEERDEQI) form a disordered region. Residues 4–187 (ADRLIHAEPQ…FGIPLRLEFY (184 aa)) form a large ATPase domain (RuvB-L) region. Residues Arg-27, Gly-68, Lys-71, Thr-72, Thr-73, 134–136 (EDY), Arg-177, Tyr-187, and Arg-224 each bind ATP. Thr-72 provides a ligand contact to Mg(2+). Positions 188-258 (NTKDLSSIVS…VADLALDMLD (71 aa)) are small ATPAse domain (RuvB-S). Residues 261 to 338 (SEGFDYMDRK…RHFDIIQPEK (78 aa)) form a head domain (RuvB-H) region. DNA contacts are provided by Arg-297, Arg-316, and Arg-321.

The protein belongs to the RuvB family. In terms of assembly, homohexamer. Forms an RuvA(8)-RuvB(12)-Holliday junction (HJ) complex. HJ DNA is sandwiched between 2 RuvA tetramers; dsDNA enters through RuvA and exits via RuvB. An RuvB hexamer assembles on each DNA strand where it exits the tetramer. Each RuvB hexamer is contacted by two RuvA subunits (via domain III) on 2 adjacent RuvB subunits; this complex drives branch migration. In the full resolvosome a probable DNA-RuvA(4)-RuvB(12)-RuvC(2) complex forms which resolves the HJ.

It localises to the cytoplasm. The catalysed reaction is ATP + H2O = ADP + phosphate + H(+). Its function is as follows. The RuvA-RuvB-RuvC complex processes Holliday junction (HJ) DNA during genetic recombination and DNA repair, while the RuvA-RuvB complex plays an important role in the rescue of blocked DNA replication forks via replication fork reversal (RFR). RuvA specifically binds to HJ cruciform DNA, conferring on it an open structure. The RuvB hexamer acts as an ATP-dependent pump, pulling dsDNA into and through the RuvAB complex. RuvB forms 2 homohexamers on either side of HJ DNA bound by 1 or 2 RuvA tetramers; 4 subunits per hexamer contact DNA at a time. Coordinated motions by a converter formed by DNA-disengaged RuvB subunits stimulates ATP hydrolysis and nucleotide exchange. Immobilization of the converter enables RuvB to convert the ATP-contained energy into a lever motion, pulling 2 nucleotides of DNA out of the RuvA tetramer per ATP hydrolyzed, thus driving DNA branch migration. The RuvB motors rotate together with the DNA substrate, which together with the progressing nucleotide cycle form the mechanistic basis for DNA recombination by continuous HJ branch migration. Branch migration allows RuvC to scan DNA until it finds its consensus sequence, where it cleaves and resolves cruciform DNA. In Shewanella sediminis (strain HAW-EB3), this protein is Holliday junction branch migration complex subunit RuvB.